The primary structure comprises 221 residues: Thiamine-phosphate synthase (221 aa).

4-amino-2-methyl-5-(diphosphooxymethyl)pyrimidine contacts are provided by residues 49 to 53 and N85; that span reads QFREK. Mg(2+) is bound by residues D86 and D105. S124 contributes to the 4-amino-2-methyl-5-(diphosphooxymethyl)pyrimidine binding site. 151-153 provides a ligand contact to 2-[(2R,5Z)-2-carboxy-4-methylthiazol-5(2H)-ylidene]ethyl phosphate; it reads TQS. K154 serves as a coordination point for 4-amino-2-methyl-5-(diphosphooxymethyl)pyrimidine. 2-[(2R,5Z)-2-carboxy-4-methylthiazol-5(2H)-ylidene]ethyl phosphate-binding positions include G183 and 203–204; that span reads IS.

The protein belongs to the thiamine-phosphate synthase family. Mg(2+) serves as cofactor.

It catalyses the reaction 2-[(2R,5Z)-2-carboxy-4-methylthiazol-5(2H)-ylidene]ethyl phosphate + 4-amino-2-methyl-5-(diphosphooxymethyl)pyrimidine + 2 H(+) = thiamine phosphate + CO2 + diphosphate. It carries out the reaction 2-(2-carboxy-4-methylthiazol-5-yl)ethyl phosphate + 4-amino-2-methyl-5-(diphosphooxymethyl)pyrimidine + 2 H(+) = thiamine phosphate + CO2 + diphosphate. The enzyme catalyses 4-methyl-5-(2-phosphooxyethyl)-thiazole + 4-amino-2-methyl-5-(diphosphooxymethyl)pyrimidine + H(+) = thiamine phosphate + diphosphate. It functions in the pathway cofactor biosynthesis; thiamine diphosphate biosynthesis; thiamine phosphate from 4-amino-2-methyl-5-diphosphomethylpyrimidine and 4-methyl-5-(2-phosphoethyl)-thiazole: step 1/1. In terms of biological role, condenses 4-methyl-5-(beta-hydroxyethyl)thiazole monophosphate (THZ-P) and 2-methyl-4-amino-5-hydroxymethyl pyrimidine pyrophosphate (HMP-PP) to form thiamine monophosphate (TMP). This chain is Thiamine-phosphate synthase, found in Histophilus somni (strain 129Pt) (Haemophilus somnus).